The chain runs to 85 residues: YcgL domain-containing protein PC1_1941 (85 aa).

Residues 1-85 form the YcgL domain; that stretch reads MFCVIYRSAK…PVENLLNTPV (85 aa).

The sequence is that of YcgL domain-containing protein PC1_1941 from Pectobacterium carotovorum subsp. carotovorum (strain PC1).